A 295-amino-acid polypeptide reads, in one-letter code: Pyridoxal 5'-phosphate synthase subunit PdxS (295 aa).

Asp25 is a D-ribose 5-phosphate binding site. Lys82 functions as the Schiff-base intermediate with D-ribose 5-phosphate in the catalytic mechanism. Residue Gly154 participates in D-ribose 5-phosphate binding. D-glyceraldehyde 3-phosphate is bound at residue Arg166. Residues Gly215 and 236–237 (GS) contribute to the D-ribose 5-phosphate site.

Belongs to the PdxS/SNZ family. As to quaternary structure, in the presence of PdxT, forms a dodecamer of heterodimers.

The enzyme catalyses aldehydo-D-ribose 5-phosphate + D-glyceraldehyde 3-phosphate + L-glutamine = pyridoxal 5'-phosphate + L-glutamate + phosphate + 3 H2O + H(+). It participates in cofactor biosynthesis; pyridoxal 5'-phosphate biosynthesis. Catalyzes the formation of pyridoxal 5'-phosphate from ribose 5-phosphate (RBP), glyceraldehyde 3-phosphate (G3P) and ammonia. The ammonia is provided by the PdxT subunit. Can also use ribulose 5-phosphate and dihydroxyacetone phosphate as substrates, resulting from enzyme-catalyzed isomerization of RBP and G3P, respectively. The chain is Pyridoxal 5'-phosphate synthase subunit PdxS from Actinobacillus pleuropneumoniae serotype 3 (strain JL03).